The following is a 596-amino-acid chain: Clathrin heavy chain linker domain-containing protein 1 (596 aa).

Positions 129–241 (QLEAKMRIIE…RDIAENLKKD (113 aa)) form a coiled coil.

This chain is Clathrin heavy chain linker domain-containing protein 1 (Clhc1), found in Mus musculus (Mouse).